We begin with the raw amino-acid sequence, 981 residues long: Ubiquitin carboxyl-terminal hydrolase 37 (981 aa).

The short motif at 32–34 (KEN) is the KEN box 1 element. Short sequence motifs (D-box) lie at residues 71–79 (RLMLTLQDN) and 96–105 (RLFLDAVHQN). Residues 111–306 (MKPSQGSGSF…TPSAKRSLGF (196 aa)) are disordered. Position 114 is a phosphoserine (serine 114). The span at 135 to 148 (RQLSYSDNQVSSKR) shows a compositional bias: polar residues. Residues 149–159 (GSLETKDDTPF) show a composition bias toward basic and acidic residues. The D-box 3 motif lies at 160-168 (RKVLGNPSR). Phosphoserine is present on serine 170. A compositionally biased stretch (low complexity) spans 183 to 200 (RTIPSLTSTSTPLRSGLL). Position 212 is a phosphoserine (serine 212). The short motif at 223–225 (KEN) is the KEN box 2 element. Positions 245–259 (SREKQLSLKQSEENR) are enriched in basic and acidic residues. Residues 283–300 (PGSTNLDRTNISSQTPSA) show a composition bias toward polar residues. A USP domain is found at 343–953 (QGFSNLGNTC…SGYIFFYMHK (611 aa)). Catalysis depends on cysteine 352, which acts as the Nucleophile. Phosphoserine; by CDK2 is present on serine 630. Phosphoserine occurs at positions 652 and 654. Disordered regions lie at residues 670–705 (EMSGSEQQQEDLEKDSKSCRIEPDKSELENSGFDGM) and 721–797 (EASP…GEVD). Basic and acidic residues-rich tracts occupy residues 683–697 (KDSKSCRIEPDKSEL) and 721–734 (EASPSLSHEDDDKP). Residues 706–725 (SEEELLAAVLEISKREASPS) form the UIM 1 domain. Residue serine 772 is modified to Phosphoserine. The segment covering 776–788 (ITKDCDENKENKT) has biased composition (basic and acidic residues). The short motif at 784 to 786 (KEN) is the KEN box 3 element. UIM domains are found at residues 808-827 (REEQELQQALAQSLQEQEAW) and 830-849 (KEDDDLKRATELSLQEFNNS). The Proton acceptor role is filled by histidine 908.

Belongs to the peptidase C19 family. As to quaternary structure, interacts with FZR1/CDH1. Interacts with CDT1. In terms of processing, polyubiquitinated via 'Lys-11'-linked ubiquitin by the APC(CDH1) complex during late mitosis, leading to its degradation. Able to mediate auto-deubiquitination. Phosphorylated at Ser-630 by CDK2 during G1/S phase but not during mitosis; phosphorylation at Ser-630 is required for deubiquitinase activity. Also polyubiquitinated during early G1 phase, without leading to degradation. Phosphorylated at Ser-114 by ATM following DNA damage, which in turn increases its deubiquitination activity towards BLM.

The protein resides in the nucleus. Its subcellular location is the chromosome. It catalyses the reaction Thiol-dependent hydrolysis of ester, thioester, amide, peptide and isopeptide bonds formed by the C-terminal Gly of ubiquitin (a 76-residue protein attached to proteins as an intracellular targeting signal).. Functionally, deubiquitinase that plays a role in different processes including cell cycle regulation, DNA replication or DNA damage response. Antagonizes the anaphase-promoting complex (APC/C) during G1/S transition by mediating deubiquitination of cyclin-A (CCNA1 and CCNA2), thereby promoting S phase entry. Specifically mediates deubiquitination of 'Lys-11'-linked polyubiquitin chains, a specific ubiquitin-linkage type mediated by the APC/C complex. Phosphorylation at Ser-628 during G1/S phase maximizes the deubiquitinase activity, leading to prevent degradation of cyclin-A (CCNA1 and CCNA2). Plays an important role in the regulation of DNA replication by stabilizing the licensing factor CDT1. Also plays an essential role beyond S-phase entry to promote the efficiency and fidelity of replication by deubiquitinating checkpoint kinase 1/CHK1, promoting its stability. Sustains the DNA damage response (DDR) by deubiquitinating and stabilizing the ATP-dependent DNA helicase BLM. Mechanistically, DNA double-strand breaks (DSB) promotes ATM-mediated phosphorylation of USP37 and enhances the binding between USP37 and BLM. Promotes cell migration by deubiquitinating and stabilizing the epithelial-mesenchymal transition (EMT)-inducing transcription factor SNAI. Plays a role in the regulation of mitotic spindle assembly and mitotic progression by associating with chromatin-associated WAPL and stabilizing it through deubiquitination. The protein is Ubiquitin carboxyl-terminal hydrolase 37 (USP37) of Bos taurus (Bovine).